Reading from the N-terminus, the 445-residue chain is Cholesterol side-chain cleavage enzyme, mitochondrial (445 aa).

A mitochondrion-targeting transit peptide spans 1–36 (RGLPSRSVFLRGCQASLSTAQERLGHPGVPTREGVR).

This sequence belongs to the cytochrome P450 family. Interacts with FDX1/adrenodoxin. The cofactor is heme.

It localises to the mitochondrion inner membrane. The catalysed reaction is 6 reduced [adrenodoxin] + cholesterol + 3 O2 + 6 H(+) = 4-methylpentanal + pregnenolone + 6 oxidized [adrenodoxin] + 4 H2O. It carries out the reaction 2 reduced [adrenodoxin] + cholesterol + O2 + 2 H(+) = (22R)-hydroxycholesterol + 2 oxidized [adrenodoxin] + H2O. It catalyses the reaction (22R)-hydroxycholesterol + 2 reduced [adrenodoxin] + O2 + 2 H(+) = (20R,22R)-20,22-dihydroxycholesterol + 2 oxidized [adrenodoxin] + H2O. The enzyme catalyses (20R,22R)-20,22-dihydroxycholesterol + 2 reduced [adrenodoxin] + O2 + 2 H(+) = 4-methylpentanal + pregnenolone + 2 oxidized [adrenodoxin] + 2 H2O. It functions in the pathway lipid metabolism; C21-steroid hormone metabolism. It participates in steroid metabolism; cholesterol metabolism. Functionally, a cytochrome P450 monooxygenase that catalyzes the side-chain hydroxylation and cleavage of cholesterol to pregnenolone, the precursor of most steroid hormones. Catalyzes three sequential oxidation reactions of cholesterol, namely the hydroxylation at C22 followed with the hydroxylation at C20 to yield 20R,22R-hydroxycholesterol that is further cleaved between C20 and C22 to yield the C21-steroid pregnenolone and 4-methylpentanal. Mechanistically, uses molecular oxygen inserting one oxygen atom into a substrate and reducing the second into a water molecule. Two electrons are provided by NADPH via a two-protein mitochondrial transfer system comprising flavoprotein FDXR (adrenodoxin/ferredoxin reductase) and nonheme iron-sulfur protein FDX1 or FDX2 (adrenodoxin/ferredoxin). The chain is Cholesterol side-chain cleavage enzyme, mitochondrial (CYP11A1) from Oryctolagus cuniculus (Rabbit).